We begin with the raw amino-acid sequence, 216 residues long: Probable nicotinate-nucleotide adenylyltransferase (216 aa).

It belongs to the NadD family.

The enzyme catalyses nicotinate beta-D-ribonucleotide + ATP + H(+) = deamido-NAD(+) + diphosphate. The protein operates within cofactor biosynthesis; NAD(+) biosynthesis; deamido-NAD(+) from nicotinate D-ribonucleotide: step 1/1. In terms of biological role, catalyzes the reversible adenylation of nicotinate mononucleotide (NaMN) to nicotinic acid adenine dinucleotide (NaAD). This chain is Probable nicotinate-nucleotide adenylyltransferase, found in Geobacillus kaustophilus (strain HTA426).